Here is a 2560-residue protein sequence, read N- to C-terminus: Plipastatin synthase subunit B (2560 aa).

Residues 7-310 (IQDIYPLSHM…NTVPVRIRSA (304 aa)) form a condensation 1 region. The tract at residues 7–1042 (IQDIYPLSHM…AVKLMSLKEH (1036 aa)) is domain 1 (tyrosine-activating). Residues 496–889 (TYRQLQVRAN…QAPGVKEAAV (394 aa)) are adenylation 1. The region spanning 965-1040 (APRTLIEADL…SMAVKLMSLK (76 aa)) is the Carrier 1 domain. Ser1000 carries the post-translational modification O-(pantetheine 4'-phosphoryl)serine. The interval 1052–1342 (QRDVYPLSFS…NTLAMRSKPE (291 aa)) is condensation 2. Residues 1052–2553 (QRDVYPLSFS…DLTLDELSEI (1502 aa)) form a domain 2 (D-allo-threonine-activating) region. An adenylation 2 region spans residues 1527–1927 (TYRDLNEKAE…QYPMIKEAAV (401 aa)). A Carrier 2 domain is found at 2006 to 2080 (SPRNEIETVM…ELSARVRKDV (75 aa)). An O-(pantetheine 4'-phosphoryl)serine modification is found at Ser2041. Residues 2088–2553 (VEGEITWTPI…DLTLDELSEI (466 aa)) form an epimerization region.

The protein belongs to the ATP-dependent AMP-binding enzyme family. The cofactor is pantetheine 4'-phosphate.

This protein is a multifunctional enzyme, able to activate and polymerize the amino acids Tyr and Thr as part of the biosynthesis of the lipopeptide antibiotic plipastatin. The Thr residue is further converted to the D-allo-isomer form. The activation sites for these amino acids consist of individual domains. This chain is Plipastatin synthase subunit B (ppsB), found in Bacillus subtilis (strain 168).